The primary structure comprises 687 residues: Variant-specific surface protein VSP4A1 (687 aa).

The first 14 residues, 1-14, serve as a signal peptide directing secretion; sequence MLLTAFYVVLGSFA. Residues 15–660 lie on the Extracellular side of the membrane; the sequence is APCQQDGDHI…SGLSTGAIAG (646 aa). Residues 661–681 traverse the membrane as a helical segment; the sequence is ISVAAIVVVGGLVGFLCWWFI. Topologically, residues 682-687 are cytoplasmic; it reads CRGKAQ.

This sequence belongs to the Giardia variant surface protein family. O-glycosylated. The major glycan is a trisaccharide with Glc at the reducing terminus. In terms of processing, palmitoylated.

It localises to the cell membrane. This chain is Variant-specific surface protein VSP4A1, found in Giardia intestinalis (Giardia lamblia).